The chain runs to 96 residues: Keratin-associated protein 12-3 (96 aa).

Tandem repeats lie at residues 10-14 (CQPTC), 15-19 (CIHSP), 24-28 (CYVPV), 30-34 (CQSSV), 35-39 (CMPVS), 45-49 (CVAPS), 50-54 (CQPSV), 55-59 (CVPVS), 60-64 (CRPII), 70-74 (CQSSG), 75-79 (CCQPP), 80-84 (CTTAL), 85-89 (CRPIS), and 90-94 (CSTPS). The interval 10–94 (CQPTCCIHSP…CRPISCSTPS (85 aa)) is 14 X 5 AA approximate repeats.

This sequence belongs to the KRTAP type 12 family. As to quaternary structure, interacts with hair keratins. Restricted to a narrow region of the hair fiber cuticle, lying approximately 20 cell layers above the apex of the dermal papilla of the hair root; not detected in any other tissues.

In terms of biological role, in the hair cortex, hair keratin intermediate filaments are embedded in an interfilamentous matrix, consisting of hair keratin-associated proteins (KRTAP), which are essential for the formation of a rigid and resistant hair shaft through their extensive disulfide bond cross-linking with abundant cysteine residues of hair keratins. The matrix proteins include the high-sulfur and high-glycine-tyrosine keratins. This is Keratin-associated protein 12-3 (KRTAP12-3) from Homo sapiens (Human).